The sequence spans 266 residues: 3-deoxy-manno-octulosonate cytidylyltransferase 1 (266 aa).

This sequence belongs to the KdsB family.

It localises to the cytoplasm. It carries out the reaction 3-deoxy-alpha-D-manno-oct-2-ulosonate + CTP = CMP-3-deoxy-beta-D-manno-octulosonate + diphosphate. It functions in the pathway nucleotide-sugar biosynthesis; CMP-3-deoxy-D-manno-octulosonate biosynthesis; CMP-3-deoxy-D-manno-octulosonate from 3-deoxy-D-manno-octulosonate and CTP: step 1/1. It participates in bacterial outer membrane biogenesis; lipopolysaccharide biosynthesis. Its function is as follows. Activates KDO (a required 8-carbon sugar) for incorporation into bacterial lipopolysaccharide in Gram-negative bacteria. The polypeptide is 3-deoxy-manno-octulosonate cytidylyltransferase 1 (Paraburkholderia phytofirmans (strain DSM 17436 / LMG 22146 / PsJN) (Burkholderia phytofirmans)).